The sequence spans 114 residues: Aspartate 1-decarboxylase (114 aa).

The Schiff-base intermediate with substrate; via pyruvic acid role is filled by Ser-25. Position 25 is a pyruvic acid (Ser) (Ser-25). Thr-57 serves as a coordination point for substrate. Tyr-58 serves as the catalytic Proton donor. A substrate-binding site is contributed by 71 to 73 (GAA).

This sequence belongs to the PanD family. In terms of assembly, heterooctamer of four alpha and four beta subunits. It depends on pyruvate as a cofactor. Is synthesized initially as an inactive proenzyme, which is activated by self-cleavage at a specific serine bond to produce a beta-subunit with a hydroxyl group at its C-terminus and an alpha-subunit with a pyruvoyl group at its N-terminus.

The protein resides in the cytoplasm. The catalysed reaction is L-aspartate + H(+) = beta-alanine + CO2. It participates in cofactor biosynthesis; (R)-pantothenate biosynthesis; beta-alanine from L-aspartate: step 1/1. In terms of biological role, catalyzes the pyruvoyl-dependent decarboxylation of aspartate to produce beta-alanine. The polypeptide is Aspartate 1-decarboxylase (Campylobacter hominis (strain ATCC BAA-381 / DSM 21671 / CCUG 45161 / LMG 19568 / NCTC 13146 / CH001A)).